The primary structure comprises 296 residues: Diaminopimelate epimerase (296 aa).

Residues Asn-17, Gln-49, and Asn-69 each coordinate substrate. Cys-78 functions as the Proton donor in the catalytic mechanism. Substrate is bound by residues 79–80, Asn-171, Asn-205, and 223–224; these read GN and ER. Cys-232 serves as the catalytic Proton acceptor. 233 to 234 serves as a coordination point for substrate; the sequence is GT.

It belongs to the diaminopimelate epimerase family. As to quaternary structure, homodimer.

The protein resides in the cytoplasm. The catalysed reaction is (2S,6S)-2,6-diaminopimelate = meso-2,6-diaminopimelate. It functions in the pathway amino-acid biosynthesis; L-lysine biosynthesis via DAP pathway; DL-2,6-diaminopimelate from LL-2,6-diaminopimelate: step 1/1. In terms of biological role, catalyzes the stereoinversion of LL-2,6-diaminopimelate (L,L-DAP) to meso-diaminopimelate (meso-DAP), a precursor of L-lysine and an essential component of the bacterial peptidoglycan. In Methylorubrum populi (strain ATCC BAA-705 / NCIMB 13946 / BJ001) (Methylobacterium populi), this protein is Diaminopimelate epimerase.